Consider the following 1025-residue polypeptide: Multidrug resistance protein MdtC (1025 aa).

12 helical membrane passes run 3-23 (FFAL…AITL), 333-353 (EVEQ…FLFL), 360-380 (IIPA…MYLC), 387-407 (LSLM…IVVL), 431-451 (VGFT…PLLL), 463-483 (FAVT…TLTP), 528-548 (LVGV…ISIP), 853-873 (VILI…LYES), 875-895 (VHPL…LLAL), 897-917 (LFNA…IGIV), 953-973 (PIMM…LSGG), and 984-1004 (ITIV…TPVV).

It belongs to the resistance-nodulation-cell division (RND) (TC 2.A.6) family. MdtC subfamily. As to quaternary structure, part of a tripartite efflux system composed of MdtA, MdtB and MdtC. MdtC forms a heteromultimer with MdtB.

It localises to the cell inner membrane. Functionally, the MdtABC tripartite complex confers resistance against novobiocin and deoxycholate. The polypeptide is Multidrug resistance protein MdtC (Escherichia coli O17:K52:H18 (strain UMN026 / ExPEC)).